A 466-amino-acid chain; its full sequence is Cytochrome b561 and DOMON domain-containing protein At3g59070 (466 aa).

Positions 1 to 25 are cleaved as a signal peptide; the sequence is MSLSSRATLVVLCCLFMLIPSFTTA. Residues 57–172 enclose the DOMON domain; sequence LNSYLHFNYA…TVVNHLWQDG (116 aa). One can recognise a Cytochrome b561 domain in the interval 179 to 380; sequence RLGMHAMSGD…MEILQFKKRW (202 aa). A run of 3 helical transmembrane segments spans residues 219–239, 252–272, and 287–307; these read IHAI…VMAA, WFYI…IGGL, and TLHT…ILSL. Residues His220, His256, His289, and His325 each coordinate heme b. The next 2 helical transmembrane spans lie at 327–347 and 355–375; these read TMGY…LSIL and IAYT…EILQ.

Heme b is required as a cofactor.

Its subcellular location is the membrane. Functionally, may act as a catecholamine-responsive trans-membrane electron transporter. This is Cytochrome b561 and DOMON domain-containing protein At3g59070 from Arabidopsis thaliana (Mouse-ear cress).